A 401-amino-acid chain; its full sequence is Glycerol-1-phosphate dehydrogenase [NAD(P)+] (401 aa).

NAD(+) contacts are provided by residues Asp57, 118–122, and 140–143; these read GTIHD and TAPS. Asp145 is a substrate binding site. Ser149 contributes to the NAD(+) binding site. Asp192 contacts substrate. Ni(2+) contacts are provided by Asp192 and His272. Position 276 (His276) interacts with substrate. His292 provides a ligand contact to Ni(2+).

This sequence belongs to the glycerol-1-phosphate dehydrogenase family. In terms of assembly, homodimer. The cofactor is Ni(2+).

The protein localises to the cytoplasm. It carries out the reaction sn-glycerol 1-phosphate + NAD(+) = dihydroxyacetone phosphate + NADH + H(+). The catalysed reaction is sn-glycerol 1-phosphate + NADP(+) = dihydroxyacetone phosphate + NADPH + H(+). Functionally, catalyzes the NAD(P)H-dependent reduction of dihydroxyacetonephosphate (DHAP or glycerone phosphate) to glycerol 1-phosphate (G1P). The G1P thus generated is probably used for the synthesis of phosphoglycerolipids in Gram-positive bacterial species. The protein is Glycerol-1-phosphate dehydrogenase [NAD(P)+] of Bacillus licheniformis (strain ATCC 14580 / DSM 13 / JCM 2505 / CCUG 7422 / NBRC 12200 / NCIMB 9375 / NCTC 10341 / NRRL NRS-1264 / Gibson 46).